The following is a 511-amino-acid chain: Glucans biosynthesis protein G (511 aa).

A signal peptide spans 1 to 22 (MMKMRWLSAAVMLTLYTSSSWA).

Belongs to the OpgD/OpgG family.

It is found in the periplasm. It participates in glycan metabolism; osmoregulated periplasmic glucan (OPG) biosynthesis. In terms of biological role, involved in the biosynthesis of osmoregulated periplasmic glucans (OPGs). In Escherichia coli O81 (strain ED1a), this protein is Glucans biosynthesis protein G.